A 438-amino-acid polypeptide reads, in one-letter code: V-type ATP synthase beta chain (438 aa).

Belongs to the ATPase alpha/beta chains family.

Functionally, produces ATP from ADP in the presence of a proton gradient across the membrane. The V-type beta chain is a regulatory subunit. In Chlamydia abortus (strain DSM 27085 / S26/3) (Chlamydophila abortus), this protein is V-type ATP synthase beta chain.